The chain runs to 449 residues: Ribulose bisphosphate carboxylase large chain (449 aa).

Residues 1 to 2 constitute a propeptide that is removed on maturation; sequence MS. At Pro-3 the chain carries N-acetylproline. An N6,N6,N6-trimethyllysine modification is found at Lys-14. 2 residues coordinate substrate: Asn-123 and Thr-173. The active-site Proton acceptor is the Lys-175. Position 177 (Lys-177) interacts with substrate. Positions 201, 203, and 204 each coordinate Mg(2+). Residue Lys-201 is modified to N6-carboxylysine. The Proton acceptor role is filled by His-294. 3 residues coordinate substrate: Xaa-295, His-327, and Ser-379.

The protein belongs to the RuBisCO large chain family. Type I subfamily. Heterohexadecamer of 8 large chains and 8 small chains; disulfide-linked. The disulfide link is formed within the large subunit homodimers. The cofactor is Mg(2+). The disulfide bond which can form in the large chain dimeric partners within the hexadecamer appears to be associated with oxidative stress and protein turnover.

The protein localises to the plastid. It localises to the chloroplast. It carries out the reaction 2 (2R)-3-phosphoglycerate + 2 H(+) = D-ribulose 1,5-bisphosphate + CO2 + H2O. It catalyses the reaction D-ribulose 1,5-bisphosphate + O2 = 2-phosphoglycolate + (2R)-3-phosphoglycerate + 2 H(+). Functionally, ruBisCO catalyzes two reactions: the carboxylation of D-ribulose 1,5-bisphosphate, the primary event in carbon dioxide fixation, as well as the oxidative fragmentation of the pentose substrate in the photorespiration process. Both reactions occur simultaneously and in competition at the same active site. The protein is Ribulose bisphosphate carboxylase large chain of Salacia pallescens.